Reading from the N-terminus, the 122-residue chain is RxLR effector protein Avh52 (122 aa).

Positions 1-21 (MRLTSILVLVIAATFHTTGTA) are cleaved as a signal peptide. The RxLR-dEER motif lies at 50–68 (RLLRRVEKDKVDYEQDEQR). A TAP1-binding region spans residues 69–86 (SFGALKDAVKKLNPVTAV). The interval 87-98 (KKFFKQRAKRKK) is nuclear localization signal (NLS).

It belongs to the RxLR effector family. In terms of assembly, interacts with host acetyl transferase TAP1.

The protein localises to the secreted. It is found in the host nucleus. Functionally, effector that suppresses plant defense responses during the early stages of pathogen infection. Suppresses cell death induced by effectors and PAMPs in plant hosts. Interacts with host acetyltransferase TAP1 and causes TAP1 relocation into the nucleus where it acetylates histones H2A and H3 during early infection, thereby promoting susceptibility of host plant to P.sojae. The sequence is that of RxLR effector protein Avh52 from Phytophthora sojae (strain P6497) (Soybean stem and root rot agent).